The primary structure comprises 466 residues: Argininosuccinate lyase (466 aa).

Residues S27, N114, and T159 each coordinate 2-(N(omega)-L-arginino)succinate. H160 (proton acceptor) is an active-site residue. S281 (proton donor) is an active-site residue. Positions 289, 321, 326, and 329 each coordinate 2-(N(omega)-L-arginino)succinate.

Belongs to the lyase 1 family. Argininosuccinate lyase subfamily. Homotetramer. In terms of processing, the N-terminus is blocked. In terms of tissue distribution, eye lens.

It catalyses the reaction 2-(N(omega)-L-arginino)succinate = fumarate + L-arginine. The protein operates within amino-acid biosynthesis; L-arginine biosynthesis; L-arginine from L-ornithine and carbamoyl phosphate: step 3/3. Delta crystallin, the principal crystallin in embryonic lens, is found only in birds and reptiles. This protein also functions as an enzymatically active argininosuccinate lyase, but it has a low activity. The chain is Argininosuccinate lyase (ASL) from Columba livia (Rock dove).